We begin with the raw amino-acid sequence, 250 residues long: Small ribosomal subunit protein uS2 (250 aa).

The protein belongs to the universal ribosomal protein uS2 family.

The chain is Small ribosomal subunit protein uS2 from Paraburkholderia phytofirmans (strain DSM 17436 / LMG 22146 / PsJN) (Burkholderia phytofirmans).